We begin with the raw amino-acid sequence, 351 residues long: Trace amine-associated receptor 2 (351 aa).

The Extracellular segment spans residues 1 to 48 (MAVSSEQHELSHFKRTQTKKEKFNCSEYGNRSCPENERSLGVRVAMYS). 2 N-linked (GlcNAc...) asparagine glycosylation sites follow: N24 and N30. 2 disulfide bridges follow: C33/C197 and C116/C201. The chain crosses the membrane as a helical span at residues 49–69 (FMAGSIFITIFGNLAMIISIS). The Cytoplasmic portion of the chain corresponds to 70–79 (YFKQLHTPTN). The chain crosses the membrane as a helical span at residues 80 to 100 (FLILSMAITDFLLGFTIMPYS). At 101–118 (MIRSVENCWYFGLTFCKI) the chain is on the extracellular side. The chain crosses the membrane as a helical span at residues 119–139 (YYSFDLMLSITSIFHLCSVAI). At 140–162 (DRFYAICYPLLYSTKITIPVIKR) the chain is on the cytoplasmic side. The chain crosses the membrane as a helical span at residues 163–183 (LLLLCWSVPGAFAFGVVFSEA). Over 184 to 207 (YADGIEGYDILVACSSSCPVMFNK) the chain is Extracellular. A helical transmembrane segment spans residues 208–228 (LWGTTLFMAGFFTPGSMMVGI). Over 229 to 263 (YGKIFAVSRKHAHAINNLRENQNNQVKKDKKAAKT) the chain is Cytoplasmic. Residues 264-284 (LGIVIGVFLLCWFPCFFTILL) form a helical membrane-spanning segment. Residues 285 to 299 (DPFLNFSTPVVLFDA) are Extracellular-facing. N289 carries N-linked (GlcNAc...) asparagine glycosylation. The chain crosses the membrane as a helical span at residues 300–322 (LTWFGYFNSTCNPLIYGFFYPWF). The Cytoplasmic portion of the chain corresponds to 323 to 351 (RRALKYILLGKIFSSCFHNTILCMQKESE).

Belongs to the G-protein coupled receptor 1 family. In terms of tissue distribution, not expressed in the pons, thalamus, hypothalamus, hippocampus, caudate, putamen, frontal cortex, basal forebrain, midbrain or liver.

The protein localises to the cell membrane. Functionally, orphan olfactory receptor specific for trace amines. Trace amine compounds are enriched in animal body fluids and act on trace amine-associated receptors (TAARs) to elicit both intraspecific and interspecific innate behaviors. Ligand-binding causes a conformation change that triggers signaling via the G(s)-class of G-proteins which activate adenylate cyclase. This chain is Trace amine-associated receptor 2, found in Homo sapiens (Human).